The sequence spans 879 residues: Phosphoenolpyruvate carboxylase (879 aa).

Residues H138 and K545 contribute to the active site.

It belongs to the PEPCase type 1 family. Requires Mg(2+) as cofactor.

The enzyme catalyses oxaloacetate + phosphate = phosphoenolpyruvate + hydrogencarbonate. Forms oxaloacetate, a four-carbon dicarboxylic acid source for the tricarboxylic acid cycle. This is Phosphoenolpyruvate carboxylase from Histophilus somni (strain 2336) (Haemophilus somnus).